A 251-amino-acid polypeptide reads, in one-letter code: Coproheme decarboxylase (251 aa).

Fe-coproporphyrin III contacts are provided by residues Arg-133, 147 to 151, His-174, Gln-187, and Ser-225; that span reads YPMSK. Tyr-147 is an active-site residue.

The protein belongs to the ChdC family. Type 1 subfamily. Requires Fe-coproporphyrin III as cofactor.

It catalyses the reaction Fe-coproporphyrin III + 2 H2O2 + 2 H(+) = heme b + 2 CO2 + 4 H2O. The catalysed reaction is Fe-coproporphyrin III + H2O2 + H(+) = harderoheme III + CO2 + 2 H2O. The enzyme catalyses harderoheme III + H2O2 + H(+) = heme b + CO2 + 2 H2O. It participates in porphyrin-containing compound metabolism; protoheme biosynthesis. Functionally, involved in coproporphyrin-dependent heme b biosynthesis. Catalyzes the decarboxylation of Fe-coproporphyrin III (coproheme) to heme b (protoheme IX), the last step of the pathway. The reaction occurs in a stepwise manner with a three-propionate intermediate. In Listeria welshimeri serovar 6b (strain ATCC 35897 / DSM 20650 / CCUG 15529 / CIP 8149 / NCTC 11857 / SLCC 5334 / V8), this protein is Coproheme decarboxylase.